The sequence spans 507 residues: Glutamyl-tRNA(Gln) amidotransferase subunit A, mitochondrial (507 aa).

Catalysis depends on charge relay system residues K79 and S160. The Acyl-ester intermediate role is filled by S184.

The protein belongs to the amidase family. GatA subfamily. As to quaternary structure, subunit of the heterotrimeric GatCAB amidotransferase (AdT) complex, composed of A, B and C subunits.

It is found in the mitochondrion. The enzyme catalyses L-glutamyl-tRNA(Gln) + L-glutamine + ATP + H2O = L-glutaminyl-tRNA(Gln) + L-glutamate + ADP + phosphate + H(+). In terms of biological role, allows the formation of correctly charged Gln-tRNA(Gln) through the transamidation of misacylated Glu-tRNA(Gln) in the mitochondria. The reaction takes place in the presence of glutamine and ATP through an activated gamma-phospho-Glu-tRNA(Gln). The chain is Glutamyl-tRNA(Gln) amidotransferase subunit A, mitochondrial from Drosophila pseudoobscura pseudoobscura (Fruit fly).